The sequence spans 514 residues: 3-octaprenyl-4-hydroxybenzoate carboxy-lyase (514 aa).

Asparagine 177 contacts Mn(2+). Residues isoleucine 180–arginine 182, arginine 194–leucine 196, and arginine 199–glycine 200 each bind prenylated FMN. Glutamate 243 is a Mn(2+) binding site. Aspartate 314 functions as the Proton donor in the catalytic mechanism.

It belongs to the UbiD family. Homohexamer. Prenylated FMN is required as a cofactor. Requires Mn(2+) as cofactor.

Its subcellular location is the cell membrane. The enzyme catalyses a 4-hydroxy-3-(all-trans-polyprenyl)benzoate + H(+) = a 2-(all-trans-polyprenyl)phenol + CO2. It functions in the pathway cofactor biosynthesis; ubiquinone biosynthesis. Its function is as follows. Catalyzes the decarboxylation of 3-octaprenyl-4-hydroxy benzoate to 2-octaprenylphenol, an intermediate step in ubiquinone biosynthesis. This is 3-octaprenyl-4-hydroxybenzoate carboxy-lyase from Bordetella parapertussis (strain 12822 / ATCC BAA-587 / NCTC 13253).